The sequence spans 869 residues: 1-phosphatidylinositol 4,5-bisphosphate phosphodiesterase 1 (869 aa).

Residues 269-304 enclose the EF-hand domain; the sequence is VSTGQLLEFFQLADINHNGLLNYFEFEKFIKILKNR. Ca(2+)-binding residues include D282, N284, N286, and E293. One can recognise a PI-PLC X-box domain in the interval 382 to 520; that stretch reads YSKPLNHYFI…LKHKILLKSK (139 aa). Active-site residues include H395 and H439. 2 residues coordinate substrate: K518 and K520. The tract at residues 546 to 571 is disordered; that stretch reads ANEQELRMKDDSTNSSSATNSSSMQR. Low complexity predominate over residues 558 to 568; sequence TNSSSATNSSS. Positions 590-709 constitute a PI-PLC Y-box domain; the sequence is ISGIHGIKFR…SGYVLKPKKL (120 aa). Substrate contacts are provided by S614 and R643. The region spanning 713–862 is the C2 domain; sequence VTKAKMIPLI…EGEQYIFCTL (150 aa).

As to quaternary structure, interacts with SGD1. Ca(2+) is required as a cofactor.

It catalyses the reaction a 1,2-diacyl-sn-glycero-3-phospho-(1D-myo-inositol-4,5-bisphosphate) + H2O = 1D-myo-inositol 1,4,5-trisphosphate + a 1,2-diacyl-sn-glycerol + H(+). Its function is as follows. The production of the second messenger molecules diacylglycerol (DAG) and inositol 1,4,5-trisphosphate (IP3) is mediated by activated phosphatidylinositol-specific phospholipase C enzymes. Required for cell growth, osmoresistance and expression of GPD1. This is 1-phosphatidylinositol 4,5-bisphosphate phosphodiesterase 1 (PLC1) from Saccharomyces cerevisiae (strain ATCC 204508 / S288c) (Baker's yeast).